The following is a 387-amino-acid chain: 3-ketoacyl-CoA thiolase (387 aa).

Residue C91 is the Acyl-thioester intermediate of the active site. Catalysis depends on proton acceptor residues H343 and C373.

It belongs to the thiolase-like superfamily. Thiolase family. In terms of assembly, heterotetramer of two alpha chains (FadB) and two beta chains (FadA).

It localises to the cytoplasm. It carries out the reaction an acyl-CoA + acetyl-CoA = a 3-oxoacyl-CoA + CoA. It participates in lipid metabolism; fatty acid beta-oxidation. Its function is as follows. Catalyzes the final step of fatty acid oxidation in which acetyl-CoA is released and the CoA ester of a fatty acid two carbons shorter is formed. This chain is 3-ketoacyl-CoA thiolase, found in Shewanella sp. (strain ANA-3).